The chain runs to 591 residues: L-fucose isomerase (591 aa).

Active-site proton acceptor residues include Glu-338 and Asp-362. The Mn(2+) site is built by Glu-338, Asp-362, and His-529.

It belongs to the L-fucose isomerase family. The cofactor is Mn(2+).

It localises to the cytoplasm. The catalysed reaction is L-fucose = L-fuculose. It functions in the pathway carbohydrate degradation; L-fucose degradation; L-lactaldehyde and glycerone phosphate from L-fucose: step 1/3. Converts the aldose L-fucose into the corresponding ketose L-fuculose. The protein is L-fucose isomerase of Phocaeicola vulgatus (strain ATCC 8482 / DSM 1447 / JCM 5826 / CCUG 4940 / NBRC 14291 / NCTC 11154) (Bacteroides vulgatus).